Here is a 160-residue protein sequence, read N- to C-terminus: Small ribosomal subunit protein uS7A (160 aa).

This sequence belongs to the universal ribosomal protein uS7 family. Part of the 30S ribosomal subunit. Contacts proteins S9 and S11.

Its function is as follows. One of the primary rRNA binding proteins, it binds directly to 16S rRNA where it nucleates assembly of the head domain of the 30S subunit. Is located at the subunit interface close to the decoding center, probably blocks exit of the E-site tRNA. The sequence is that of Small ribosomal subunit protein uS7A from Aquifex aeolicus (strain VF5).